A 302-amino-acid chain; its full sequence is Protoheme IX farnesyltransferase (302 aa).

9 consecutive transmembrane segments (helical) span residues 28–48 (VVALMILTSVIGMLLAAPGVP), 50–70 (WSVLLFGNLGIALLAGAAAVV), 95–115 (IAPLDALLFATVLAALGMVVL), 122–142 (LTAWLTLASLVGYAGVYTLFL), 150–170 (IVIGGLAGAMPPLLGWTAVTG), 176–196 (ALLLVLIIFAWTPPHFWALAI), 221–241 (LHILLYTLMLLAVSLLPFVTG), 243–263 (SGGIYLVGALALGLRFLQYAV), and 282–302 (ITYLMALFVVLLVDHFVFVPA).

This sequence belongs to the UbiA prenyltransferase family. Protoheme IX farnesyltransferase subfamily.

Its subcellular location is the cell inner membrane. The catalysed reaction is heme b + (2E,6E)-farnesyl diphosphate + H2O = Fe(II)-heme o + diphosphate. The protein operates within porphyrin-containing compound metabolism; heme O biosynthesis; heme O from protoheme: step 1/1. Functionally, converts heme B (protoheme IX) to heme O by substitution of the vinyl group on carbon 2 of heme B porphyrin ring with a hydroxyethyl farnesyl side group. The protein is Protoheme IX farnesyltransferase of Marinobacter nauticus (strain ATCC 700491 / DSM 11845 / VT8) (Marinobacter aquaeolei).